Reading from the N-terminus, the 518-residue chain is Protein CYCLOPS (518 aa).

Residues 401–451 (DKKRKSLERYGSITSAVSDDKGDTTKKRRVERSRKMAEAKERNSTPSVPSD) form a disordered region. 2 consecutive short sequence motifs (nuclear localization signal) follow at residues 402–405 (KKRK) and 426–429 (KKRR). Positions 433 to 443 (SRKMAEAKERN) are enriched in basic and acidic residues. A coiled-coil region spans residues 452-518 (MQAVLKRCEN…ERILSETEKM (67 aa)).

It belongs to the CYCLOPS family. Forms homodimers. Interacts with CCAMK. In terms of processing, phosphorylated at the N-terminus by CCAMK. As to expression, expressed in roots.

The protein localises to the nucleus. Involved in symbiotic signaling. Required for root infection by symbiotic rhizobia, infection thread (IT) formation, and nodule development. Probably not involved in nodule organogenesis. Involved in arbuscular mycorrhizal (AM) symbiosis. Required for fungal infection of the outer cortical cell layers, and for arbuscule development during the AM symbiosis, by binding, as a complex comprising CCaMK, CYCLOPS, and DELLA, to RAM1 promoter cis element thus promoting its expression. Acts downstream of CCAMK. Binds to the promoter of ERN1 and strongly transactivates ERN1, a transcriptional regulator required for nodulation. This is Protein CYCLOPS from Lotus japonicus (Lotus corniculatus var. japonicus).